A 248-amino-acid chain; its full sequence is PGSPQKRAASPRKSPRKSPKKSPRKASASPRRKAKRARASTHPPVLEMVQAAITAMKERKGSSAAKIKSYMAANYRVDMNVLAPHVRRALRNGVASGALKQVTGTGASGRFRVGAVAKPKKAKKTSAAAKAKKAKAAAAKKARKAKAAAKRKAALAKKKAAAAKRKAAAKAKKAKKPKKKAAKKAKKPAKKSPKKAKKPAKKSPKKKKAKRSPKKAKKAAGKRKPAAKKARRSPRKAGKRRSPKKARK.

Disordered stretches follow at residues 1–46 (PGSP…PPVL) and 115–248 (AVAK…KARK). The span at 9 to 39 (ASPRKSPRKSPKKSPRKASASPRRKAKRARA) shows a compositional bias: basic residues. One can recognise an H15 domain in the interval 41–115 (THPPVLEMVQ…GASGRFRVGA (75 aa)). Residues 118–248 (KPKKAKKTSA…KRRSPKKARK (131 aa)) show a composition bias toward basic residues.

The protein belongs to the histone H1/H5 family. As to expression, sperm.

It is found in the nucleus. The protein localises to the chromosome. In terms of biological role, histones H1 are necessary for the condensation of nucleosome chains into higher-order structures. This is Histone H1, gonadal from Parechinus angulosus (Angulate sea urchin).